The following is a 444-amino-acid chain: Bystin (444 aa).

Disordered stretches follow at residues 1–37 (MAKKRDRIVNTQPFISDDASVASSRKRSKVPKTHQKQ) and 53–85 (ALAQQKEVADEENAERNPSSAAFAVAGAATAGE). The span at 24–34 (SRKRSKVPKTH) shows a compositional bias: basic residues. The segment covering 73–84 (AAFAVAGAATAG) has biased composition (low complexity).

This sequence belongs to the bystin family. As to quaternary structure, component of the 40S pre-ribosome. In terms of tissue distribution, highly expressed in flowers and at lower levels in roots, hypocotyls, stems, leaves, siliques and seeds.

The protein resides in the nucleus. It is found in the nucleolus. Its subcellular location is the nucleoplasm. Functionally, essential protein required during embryogenesis and pollen development. Required for processing of 20S pre-rRNA precursor and biogenesis of 40S ribosomal subunits. The sequence is that of Bystin from Arabidopsis thaliana (Mouse-ear cress).